A 331-amino-acid chain; its full sequence is Adenosine deaminase (331 aa).

Zn(2+)-binding residues include His-12 and His-14. Substrate-binding residues include His-14, Asp-16, and Gly-170. His-197 serves as a coordination point for Zn(2+). The active-site Proton donor is Glu-200. Asp-278 lines the Zn(2+) pocket. Residue Asp-279 participates in substrate binding.

The protein belongs to the metallo-dependent hydrolases superfamily. Adenosine and AMP deaminases family. Adenosine deaminase subfamily. Requires Zn(2+) as cofactor.

It catalyses the reaction adenosine + H2O + H(+) = inosine + NH4(+). The catalysed reaction is 2'-deoxyadenosine + H2O + H(+) = 2'-deoxyinosine + NH4(+). Its function is as follows. Catalyzes the hydrolytic deamination of adenosine and 2-deoxyadenosine. This Shewanella loihica (strain ATCC BAA-1088 / PV-4) protein is Adenosine deaminase.